The primary structure comprises 537 residues: Putative cysteine ligase BshC (537 aa).

Residues 422 to 450 adopt a coiled-coil conformation; that stretch reads IEKVEGMIEQQRRLNKDLLDEVAGNQNNI.

This sequence belongs to the BshC family.

Functionally, involved in bacillithiol (BSH) biosynthesis. May catalyze the last step of the pathway, the addition of cysteine to glucosamine malate (GlcN-Mal) to generate BSH. This is Putative cysteine ligase BshC from Staphylococcus aureus (strain COL).